The chain runs to 475 residues: Pyruvate kinase (475 aa).

Arg-33 lines the substrate pocket. The K(+) site is built by Asn-35, Ser-37, and Asp-67. 35–38 (NFSH) is a binding site for ATP. ATP contacts are provided by Arg-74 and Lys-155. Glu-220 serves as a coordination point for Mg(2+). Gly-243, Asp-244, and Thr-276 together coordinate substrate. Residue Asp-244 participates in Mg(2+) binding.

Belongs to the pyruvate kinase family. In terms of assembly, homotetramer. The cofactor is Mg(2+). K(+) is required as a cofactor.

The catalysed reaction is pyruvate + ATP = phosphoenolpyruvate + ADP + H(+). The protein operates within carbohydrate degradation; glycolysis; pyruvate from D-glyceraldehyde 3-phosphate: step 5/5. This Corynebacterium glutamicum (strain ATCC 13032 / DSM 20300 / JCM 1318 / BCRC 11384 / CCUG 27702 / LMG 3730 / NBRC 12168 / NCIMB 10025 / NRRL B-2784 / 534) protein is Pyruvate kinase (pyk).